A 443-amino-acid chain; its full sequence is Cell division protein FtsA (443 aa).

Belongs to the FtsA/MreB family. In terms of assembly, self-interacts. Interacts with FtsZ.

The protein resides in the cell inner membrane. Functionally, cell division protein that is involved in the assembly of the Z ring. May serve as a membrane anchor for the Z ring. This is Cell division protein FtsA from Agrobacterium fabrum (strain C58 / ATCC 33970) (Agrobacterium tumefaciens (strain C58)).